Here is a 359-residue protein sequence, read N- to C-terminus: Glucose 1-dehydrogenase (359 aa).

Cys39 contributes to the Zn(2+) binding site. Thr41 contacts substrate. 2 residues coordinate Zn(2+): His64 and Glu65. Residues Glu116 and Glu152 each contribute to the substrate site. Zn(2+) is bound at residue Glu152. 183 to 186 (AGPI) serves as a coordination point for NADP(+).

Belongs to the zinc-containing alcohol dehydrogenase family. Glucose 1-dehydrogenase subfamily. Zn(2+) is required as a cofactor.

It carries out the reaction D-glucose + NAD(+) = D-glucono-1,5-lactone + NADH + H(+). The catalysed reaction is D-glucose + NADP(+) = D-glucono-1,5-lactone + NADPH + H(+). In terms of biological role, catalyzes the NAD(P)(+)-dependent oxidation of D-glucose to D-gluconate via gluconolactone. Can utilize both NAD(+) and NADP(+) as electron acceptor. Is involved in the degradation of glucose through a non-phosphorylative variant of the Entner-Doudoroff pathway. The protein is Glucose 1-dehydrogenase of Methanocella arvoryzae (strain DSM 22066 / NBRC 105507 / MRE50).